The following is a 105-amino-acid chain: Thioredoxin (105 aa).

One can recognise a Thioredoxin domain in the interval 2 to 105 (VKLIESKEAF…KLEASITEYA (104 aa)). An N6-acetyllysine modification is found at lysine 3. N6-succinyllysine is present on lysine 8. Residues cysteine 32 and cysteine 35 each act as nucleophile in the active site. A disulfide bridge connects residues cysteine 32 and cysteine 35. N6-acetyllysine is present on lysine 39. Cysteine 62 and cysteine 69 each carry S-nitrosocysteine. Cysteine 73 carries the S-nitrosocysteine; alternate modification. Lysine 94 carries the post-translational modification N6-acetyllysine; alternate. Position 94 is an N6-succinyllysine; alternate (lysine 94).

It belongs to the thioredoxin family. As to quaternary structure, homodimer; disulfide-linked. Interacts with TXNIP through the redox-active site. Interacts with MAP3K5 and CASP3. Interacts with APEX1; the interaction stimulates the FOS/JUN AP-1 DNA-binding activity in a redox-dependent manner. In the fully reduced protein, both Cys-69 and Cys-73 are nitrosylated in response to nitric oxide (NO). When two disulfide bonds are present in the protein, only Cys-73 is nitrosylated. Cys-73 can serve as donor for nitrosylation of target proteins.

The protein localises to the nucleus. Its subcellular location is the cytoplasm. It localises to the secreted. In terms of biological role, participates in various redox reactions through the reversible oxidation of its active center dithiol to a disulfide and catalyzes dithiol-disulfide exchange reactions. Plays a role in the reversible S-nitrosylation of cysteine residues in target proteins, and thereby contributes to the response to intracellular nitric oxide. Nitrosylates the active site Cys of CASP3 in response to nitric oxide (NO), and thereby inhibits caspase-3 activity. Induces the FOS/JUN AP-1 DNA binding activity in ionizing radiation (IR) cells through its oxidation/reduction status and stimulates AP-1 transcriptional activity. Functionally, ADF augments the expression of the interleukin-2 receptor TAC (IL2R/P55). The sequence is that of Thioredoxin (Txn) from Mus musculus (Mouse).